The chain runs to 43 residues: Neurotrophin-3 (43 aa).

The protein belongs to the NGF-beta family.

The protein localises to the secreted. Functionally, seems to promote the survival of visceral and proprioceptive sensory neurons. In Raja clavata (Thornback ray), this protein is Neurotrophin-3 (ntf3).